The sequence spans 301 residues: Probable alpha-L-glutamate ligase 1 (301 aa).

The ATP-grasp domain occupies 104–287; it reads MQLMSRRGIG…VAGAIIDFVE (184 aa). ATP is bound by residues lysine 141, 178–179, aspartate 187, and 211–213; these read EY and RSN. 3 residues coordinate Mg(2+): aspartate 248, glutamate 260, and asparagine 262. Residues aspartate 248, glutamate 260, and asparagine 262 each contribute to the Mn(2+) site.

Belongs to the RimK family. Requires Mg(2+) as cofactor. Mn(2+) is required as a cofactor.

The polypeptide is Probable alpha-L-glutamate ligase 1 (Shewanella baltica (strain OS185)).